The sequence spans 58 residues: Succinate dehydrogenase subunit 8B, mitochondrial (58 aa).

In terms of assembly, component of complex II composed of eight subunits in plants: four classical SDH subunits SDH1, SDH2, SDH3 and SDH4 (a flavoprotein (FP), an iron-sulfur protein (IP), and a cytochrome b composed of a large and a small subunit.), as well as four subunits unknown in mitochondria from bacteria and heterotrophic eukaryotes.

It is found in the mitochondrion inner membrane. Its pathway is carbohydrate metabolism; tricarboxylic acid cycle. The chain is Succinate dehydrogenase subunit 8B, mitochondrial from Oryza sativa subsp. japonica (Rice).